The chain runs to 54 residues: UPF0434 protein BCI_0256 (54 aa).

It belongs to the UPF0434 family.

In Baumannia cicadellinicola subsp. Homalodisca coagulata, this protein is UPF0434 protein BCI_0256.